The sequence spans 77 residues: Small ribosomal subunit protein bS21 (77 aa).

Residues 38 to 52 (KPSEKRAREKAEAIR) show a composition bias toward basic and acidic residues. Residues 38–77 (KPSEKRAREKAEAIRRTRKLARKRAQREGIVSNGRTASVR) are disordered. Over residues 53-62 (RTRKLARKRA) the composition is skewed to basic residues.

It belongs to the bacterial ribosomal protein bS21 family.

This chain is Small ribosomal subunit protein bS21, found in Bartonella bacilliformis (strain ATCC 35685 / KC583 / Herrer 020/F12,63).